Reading from the N-terminus, the 89-residue chain is Small ribosomal subunit protein uS17 (89 aa).

The protein belongs to the universal ribosomal protein uS17 family. As to quaternary structure, part of the 30S ribosomal subunit.

One of the primary rRNA binding proteins, it binds specifically to the 5'-end of 16S ribosomal RNA. The chain is Small ribosomal subunit protein uS17 from Coxiella burnetii (strain RSA 493 / Nine Mile phase I).